Here is a 328-residue protein sequence, read N- to C-terminus: D-cysteine desulfhydrase (328 aa).

Position 51 is an N6-(pyridoxal phosphate)lysine (lysine 51).

It belongs to the ACC deaminase/D-cysteine desulfhydrase family. In terms of assembly, homodimer. Requires pyridoxal 5'-phosphate as cofactor.

The enzyme catalyses D-cysteine + H2O = hydrogen sulfide + pyruvate + NH4(+) + H(+). In terms of biological role, catalyzes the alpha,beta-elimination reaction of D-cysteine and of several D-cysteine derivatives. It could be a defense mechanism against D-cysteine. In Salmonella typhimurium (strain LT2 / SGSC1412 / ATCC 700720), this protein is D-cysteine desulfhydrase.